The chain runs to 397 residues: Succinate--CoA ligase [ADP-forming] subunit beta (397 aa).

Residues 9–254 (KALLKSFGAP…TTEEDEKEIE (246 aa)) enclose the ATP-grasp domain. ATP-binding positions include lysine 46, 53–55 (GRG), glutamate 109, alanine 112, and glutamate 117. Asparagine 209 and aspartate 223 together coordinate Mg(2+). Substrate is bound by residues asparagine 274 and 331-333 (GIM).

Belongs to the succinate/malate CoA ligase beta subunit family. As to quaternary structure, heterotetramer of two alpha and two beta subunits. Mg(2+) is required as a cofactor.

The catalysed reaction is succinate + ATP + CoA = succinyl-CoA + ADP + phosphate. It catalyses the reaction GTP + succinate + CoA = succinyl-CoA + GDP + phosphate. Its pathway is carbohydrate metabolism; tricarboxylic acid cycle; succinate from succinyl-CoA (ligase route): step 1/1. Its function is as follows. Succinyl-CoA synthetase functions in the citric acid cycle (TCA), coupling the hydrolysis of succinyl-CoA to the synthesis of either ATP or GTP and thus represents the only step of substrate-level phosphorylation in the TCA. The beta subunit provides nucleotide specificity of the enzyme and binds the substrate succinate, while the binding sites for coenzyme A and phosphate are found in the alpha subunit. This is Succinate--CoA ligase [ADP-forming] subunit beta from Mesorhizobium japonicum (strain LMG 29417 / CECT 9101 / MAFF 303099) (Mesorhizobium loti (strain MAFF 303099)).